The primary structure comprises 605 residues: Glutamine--fructose-6-phosphate aminotransferase [isomerizing] (605 aa).

Cysteine 2 functions as the Nucleophile; for GATase activity in the catalytic mechanism. Residues 2 to 220 enclose the Glutamine amidotransferase type-2 domain; it reads CGIVGVTGKD…DGEIVVVKPD (219 aa). 2 SIS domains span residues 286–426 and 458–595; these read LLTA…VDQP and AKSA…VDKP. Residue lysine 600 is the For Fru-6P isomerization activity of the active site.

As to quaternary structure, homodimer.

It is found in the cytoplasm. The enzyme catalyses D-fructose 6-phosphate + L-glutamine = D-glucosamine 6-phosphate + L-glutamate. Its function is as follows. Catalyzes the first step in hexosamine metabolism, converting fructose-6P into glucosamine-6P using glutamine as a nitrogen source. The chain is Glutamine--fructose-6-phosphate aminotransferase [isomerizing] from Lactiplantibacillus plantarum (strain ATCC BAA-793 / NCIMB 8826 / WCFS1) (Lactobacillus plantarum).